Reading from the N-terminus, the 538-residue chain is Dihomomethionine N-hydroxylase (538 aa).

The chain crosses the membrane as a helical span at residues 8–28 (LPYPFHILLVFILSMASITLL).

Belongs to the cytochrome P450 family. Heme serves as cofactor. Highly expressed in cotyledons, leaves, stems and siliques. Detected in flowers and lateral roots, but not in the main root. Expressed only in the vascular bundles in apical plant parts.

It is found in the endoplasmic reticulum membrane. The catalysed reaction is an L-polyhomomethionine + 2 reduced [NADPH--hemoprotein reductase] + 2 O2 = an (E)-omega-(methylsulfanyl)-alkanal oxime + 2 oxidized [NADPH--hemoprotein reductase] + CO2 + 3 H2O + 2 H(+). The enzyme catalyses L-dihomomethionine + 2 reduced [NADPH--hemoprotein reductase] + 2 O2 = (E)-5-(methylsulfanyl)pentanal oxime + 2 oxidized [NADPH--hemoprotein reductase] + CO2 + 3 H2O + 2 H(+). It carries out the reaction L-trihomomethionine + 2 reduced [NADPH--hemoprotein reductase] + 2 O2 = (E)-6-(methylsulfanyl)hexanal oxime + 2 oxidized [NADPH--hemoprotein reductase] + CO2 + 3 H2O + 2 H(+). Its function is as follows. Catalyzes the conversion of the short chain elongated methionines di-, tri-, and tetrahomomethionine to their respective aldoximes 5-methylthiopentanaldoxime, 6-methylthiohexanaldoxime, and 7-methylheptanaldoxime. This is Dihomomethionine N-hydroxylase (CYP79F1) from Arabidopsis thaliana (Mouse-ear cress).